Reading from the N-terminus, the 104-residue chain is Phosphoribosyl-ATP pyrophosphatase (104 aa).

This sequence belongs to the PRA-PH family.

It localises to the cytoplasm. The enzyme catalyses 1-(5-phospho-beta-D-ribosyl)-ATP + H2O = 1-(5-phospho-beta-D-ribosyl)-5'-AMP + diphosphate + H(+). The protein operates within amino-acid biosynthesis; L-histidine biosynthesis; L-histidine from 5-phospho-alpha-D-ribose 1-diphosphate: step 2/9. The sequence is that of Phosphoribosyl-ATP pyrophosphatase from Methanosarcina barkeri (strain Fusaro / DSM 804).